Here is a 267-residue protein sequence, read N- to C-terminus: Glutamate racemase (267 aa).

Substrate contacts are provided by residues 13 to 14 (DS) and 45 to 46 (YS). Catalysis depends on Cys77, which acts as the Proton donor/acceptor. 78-79 (NT) is a binding site for substrate. Cys188 serves as the catalytic Proton donor/acceptor. 189–190 (TH) is a substrate binding site.

The protein belongs to the aspartate/glutamate racemases family.

It catalyses the reaction L-glutamate = D-glutamate. It functions in the pathway cell wall biogenesis; peptidoglycan biosynthesis. Functionally, provides the (R)-glutamate required for cell wall biosynthesis. The polypeptide is Glutamate racemase (Histophilus somni (strain 129Pt) (Haemophilus somnus)).